The sequence spans 420 residues: MCCFLLVSVLLATTLTDVASAQRWRQTSGGGKDRWDGLLDPLDADLRRDIIRYGELAQATSDALIGDPASPFAGASRYAPDAFLRKVRASDPDAYRVTRFVYATSSVRLPDAFMPRPAPSAGAAWSGESNWMGYVAVAADGVAANAGRRDIVVAWRGTKRAVEWANDLDITLVPADGVVGPGPGWTQPSVHRGFLSVYTSKSFSSPFNKLSAREQVLAEITRLLRAYKNENCSITITGHSLGAALSTLNAIDIVANGYNVRGSSRVPVPVTAIALASPRVGDDQFKRAFDSTPNLSLLRVRNAPDIVPTILPSAFFKDVGAELLVDTRRSPYLKNPAGPAQWHNLECYLHAVAGTQGAGDGAGFSLVVDRDLALVNKEVDALRDEYQVPAAWWVEKNKGMVQNASGRWVLQDHEEGNLAM.

Positions 1–21 (MCCFLLVSVLLATTLTDVASA) are cleaved as a signal peptide. Asn-231 carries an N-linked (GlcNAc...) asparagine glycan. Ser-240 serves as the catalytic Acyl-ester intermediate. Ser-240 serves as the catalytic Charge relay system. Asn-294 carries an N-linked (GlcNAc...) asparagine glycan. Catalysis depends on charge relay system residues Asp-305 and His-343. The stretch at 367–388 (VVDRDLALVNKEVDALRDEYQV) forms a coiled coil. Residue Asn-403 is glycosylated (N-linked (GlcNAc...) asparagine).

It belongs to the AB hydrolase superfamily. Lipase family.

The protein resides in the secreted. Its function is as follows. Acylhydrolase that catalyzes the hydrolysis of phospholipids at the sn-1 position. The protein is Phospholipase A1-II 3 of Oryza sativa subsp. indica (Rice).